The primary structure comprises 1894 residues: Plexin-A4 (1894 aa).

The signal sequence occupies residues 1 to 23 (MKAMPWNWTCLLSHLLMVGMGSS). The region spanning 24–507 (TLLTRQPAPL…SERQLTRVPV (484 aa)) is the Sema domain. The Extracellular portion of the chain corresponds to 24 to 1237 (TLLTRQPAPL…IAPDSPLSLP (1214 aa)). 10 cysteine pairs are disulfide-bonded: Cys-95–Cys-104, Cys-130–Cys-138, Cys-284–Cys-405, Cys-300–Cys-356, Cys-374–Cys-393, Cys-510–Cys-527, Cys-516–Cys-558, Cys-519–Cys-536, Cys-530–Cys-542, and Cys-593–Cys-612. The region spanning 509 to 559 (SCGQYQSCGECLGSGDPHCGWCVLHNTCTRKERCERSKEPRRFASEMKQCV) is the PSI 1 domain. An N-linked (GlcNAc...) asparagine glycan is attached at Asn-655. 2 consecutive PSI domains span residues 655–702 (NCSV…EDCP) and 803–856 (KCGA…SKCT). IPT/TIG domains lie at 858–952 (PRIT…YYFM), 954–1037 (LTLS…FQYV), 1040–1139 (PTIV…FTYY), and 1142–1230 (PVFE…YIAP). Residues Asn-1007, Asn-1132, and Asn-1180 are each glycosylated (N-linked (GlcNAc...) asparagine). The helical transmembrane segment at 1238 to 1258 (AIVSIAVAGGLLIIFIVAVLI) threads the bilayer. The Cytoplasmic segment spans residues 1259–1894 (AYKRKSRESD…QVITLMSLDS (636 aa)). Position 1350 is an N6-acetyllysine (Lys-1350).

It belongs to the plexin family. Interacts with NRP1 and NRP2.

The protein localises to the cell membrane. Coreceptor for SEMA3A. Necessary for signaling by class 3 semaphorins and subsequent remodeling of the cytoskeleton. Plays a role in axon guidance in the developing nervous system. Class 3 semaphorins bind to a complex composed of a neuropilin and a plexin. The plexin modulates the affinity of the complex for specific semaphorins, and its cytoplasmic domain is required for the activation of down-stream signaling events in the cytoplasm. This Homo sapiens (Human) protein is Plexin-A4 (PLXNA4).